Consider the following 529-residue polypeptide: Bifunctional purine biosynthesis protein PurH (529 aa).

In terms of domain architecture, MGS-like spans 1–146; the sequence is MAPTALLSVS…KNHAHVAVLT (146 aa).

Belongs to the PurH family.

It carries out the reaction (6R)-10-formyltetrahydrofolate + 5-amino-1-(5-phospho-beta-D-ribosyl)imidazole-4-carboxamide = 5-formamido-1-(5-phospho-D-ribosyl)imidazole-4-carboxamide + (6S)-5,6,7,8-tetrahydrofolate. The enzyme catalyses IMP + H2O = 5-formamido-1-(5-phospho-D-ribosyl)imidazole-4-carboxamide. It functions in the pathway purine metabolism; IMP biosynthesis via de novo pathway; 5-formamido-1-(5-phospho-D-ribosyl)imidazole-4-carboxamide from 5-amino-1-(5-phospho-D-ribosyl)imidazole-4-carboxamide (10-formyl THF route): step 1/1. Its pathway is purine metabolism; IMP biosynthesis via de novo pathway; IMP from 5-formamido-1-(5-phospho-D-ribosyl)imidazole-4-carboxamide: step 1/1. In Synechococcus sp. (strain CC9311), this protein is Bifunctional purine biosynthesis protein PurH.